The primary structure comprises 132 residues: Small ribosomal subunit protein uS8c (132 aa).

Belongs to the universal ribosomal protein uS8 family. In terms of assembly, part of the 30S ribosomal subunit.

The protein localises to the plastid. It is found in the chloroplast. In terms of biological role, one of the primary rRNA binding proteins, it binds directly to 16S rRNA central domain where it helps coordinate assembly of the platform of the 30S subunit. The protein is Small ribosomal subunit protein uS8c (rps8) of Chaetosphaeridium globosum (Charophycean green alga).